The primary structure comprises 347 residues: Cyclic AMP-dependent transcription factor ATF-4 (347 aa).

A disordered region spans residues 202-296 (TPQCVKEEDT…AATRYRQKKR (95 aa)). At threonine 211 the chain carries Phosphothreonine. Phosphoserine occurs at positions 213, 217, 222, 229, and 233. Residues 213–222 (SDSDSGICMS) carry the BetaTrCP degron motif motif. Residues 228 to 238 (GSPQHSPSTSR) show a composition bias toward polar residues. Proline 234 carries the post-translational modification 4-hydroxyproline. A phosphoserine mark is found at serine 243 and serine 246. Residues lysine 256 and lysine 268 each participate in a glycyl lysine isopeptide (Lys-Gly) (interchain with G-Cter in SUMO2) cross-link. Over residues 269–283 (VKTEKLDKKLKKMEQ) the composition is skewed to basic and acidic residues. A bZIP domain is found at 274-337 (LDKKLKKMEQ…QYLKDLIEEV (64 aa)). The basic motif stretch occupies residues 276 to 296 (KKLKKMEQNKTAATRYRQKKR). Residues 301 to 337 (ALTGECKELEKKNEALKEKADSLAKEIQYLKDLIEEV) form an interaction with GABBR1 region. Residues 302–330 (LTGECKELEKKNEALKEKADSLAKEIQYL) form a leucine-zipper region. An N6-acetyllysine modification is found at lysine 307.

The protein belongs to the bZIP family. Binds DNA as a homodimer and as a heterodimer. Heterodimer; heterodimerizes with CEBPB. Heterodimer; heterodimerizes with DDIT3/CHOP. Interacts with CEP290 (via an N-terminal region). Interacts with NEK6, DAPK2 (isoform 2) and ZIPK/DAPK3. Interacts (via its leucine zipper domain) with GABBR1 and GABBR2 (via their C-termini). Forms a heterodimer with TXLNG in osteoblasts. Interacts (via its DNA binding domain) with FOXO1 (C-terminal half); the interaction occurs in osteoblasts and regulates glucose homeostasis through suppression of beta-cell proliferation and a decrease in insulin production. Interacts with SATB2; the interaction results in enhanced DNA binding and transactivation by these transcription factors. Interacts with ABRAXAS2. Interacts with TRIB3, inhibiting the transactivation activity of ATF4. Interacts with DISC1; which inhibits ATF4 transcription factor activity by disrupting ATF4 dimerization and DNA-binding. Interacts with EP300/p300; EP300/p300 stabilizes ATF4 and increases its transcriptional activity independently of its catalytic activity by preventing its ubiquitination. In terms of processing, ubiquitinated by SCF(BTRC) in response to mTORC1 signal, followed by proteasomal degradation and leading to down-regulate expression of SIRT4. Interaction with EP300/p300 inhibits ubiquitination by SCF(BTRC). Post-translationally, phosphorylation at Ser-243 by RPS6KA3/RSK2 in osteoblasts enhances transactivation activity and promotes osteoblast differentiation. Phosphorylated on the betaTrCP degron motif at Ser-217, followed by phosphorylation at Thr-211, Ser-222, Ser-229, Ser-233 and Ser-246, promoting interaction with BTRC and ubiquitination. Phosphorylation is promoted by mTORC1. Phosphorylation at Ser-213 by CK2 decreases its stability. Phosphorylated by NEK6. Hydroxylated by PHD3, leading to decreased protein stability. In terms of tissue distribution, expressed in brain, heart, liver, spleen, lung and muscle, but not testis.

The protein localises to the nucleus. It is found in the nucleus speckle. Its subcellular location is the cytoplasm. It localises to the cell membrane. The protein resides in the cytoskeleton. The protein localises to the microtubule organizing center. It is found in the centrosome. Transcription factor that binds the cAMP response element (CRE) (consensus: 5'-GTGACGT[AC][AG]-3') and displays two biological functions, as regulator of metabolic and redox processes under normal cellular conditions, and as master transcription factor during integrated stress response (ISR). Binds to asymmetric CRE's as a heterodimer and to palindromic CRE's as a homodimer. Core effector of the ISR, which is required for adaptation to various stress such as endoplasmic reticulum (ER) stress, amino acid starvation, mitochondrial stress or oxidative stress. During ISR, ATF4 translation is induced via an alternative ribosome translation re-initiation mechanism in response to EIF2S1/eIF-2-alpha phosphorylation, and stress-induced ATF4 acts as a master transcription factor of stress-responsive genes in order to promote cell recovery. Promotes the transcription of genes linked to amino acid sufficiency and resistance to oxidative stress to protect cells against metabolic consequences of ER oxidation. Activates the transcription of NLRP1, possibly in concert with other factors in response to ER stress. Activates the transcription of asparagine synthetase (ASNS) in response to amino acid deprivation or ER stress. However, when associated with DDIT3/CHOP, the transcriptional activation of the ASNS gene is inhibited in response to amino acid deprivation. Together with DDIT3/CHOP, mediates programmed cell death by promoting the expression of genes involved in cellular amino acid metabolic processes, mRNA translation and the terminal unfolded protein response (terminal UPR), a cellular response that elicits programmed cell death when ER stress is prolonged and unresolved. Activates the expression of COX7A2L/SCAF1 downstream of the EIF2AK3/PERK-mediated unfolded protein response, thereby promoting formation of respiratory chain supercomplexes and increasing mitochondrial oxidative phosphorylation. Together with DDIT3/CHOP, activates the transcription of the IRS-regulator TRIB3 and promotes ER stress-induced neuronal cell death by regulating the expression of BBC3/PUMA in response to ER stress. May cooperate with the UPR transcriptional regulator QRICH1 to regulate ER protein homeostasis which is critical for cell viability in response to ER stress. In the absence of stress, ATF4 translation is at low levels and it is required for normal metabolic processes such as embryonic lens formation, fetal liver hematopoiesis, bone development and synaptic plasticity. Acts as a regulator of osteoblast differentiation in response to phosphorylation by RPS6KA3/RSK2: phosphorylation in osteoblasts enhances transactivation activity and promotes expression of osteoblast-specific genes and post-transcriptionally regulates the synthesis of Type I collagen, the main constituent of the bone matrix. Cooperates with FOXO1 in osteoblasts to regulate glucose homeostasis through suppression of beta-cell production and decrease in insulin production. Activates transcription of SIRT4. Regulates the circadian expression of the core clock component PER2 and the serotonin transporter SLC6A4. Binds in a circadian time-dependent manner to the cAMP response elements (CRE) in the SLC6A4 and PER2 promoters and periodically activates the transcription of these genes. Mainly acts as a transcriptional activator in cellular stress adaptation, but it can also act as a transcriptional repressor: acts as a regulator of synaptic plasticity by repressing transcription, thereby inhibiting induction and maintenance of long-term memory. Regulates synaptic functions via interaction with DISC1 in neurons, which inhibits ATF4 transcription factor activity by disrupting ATF4 dimerization and DNA-binding. This is Cyclic AMP-dependent transcription factor ATF-4 from Rattus norvegicus (Rat).